An 843-amino-acid chain; its full sequence is Ribosome biogenesis protein ERB1 (843 aa).

2 disordered regions span residues 36–189 (KKAA…RYIY) and 364–419 (ADES…REYL). Acidic residues-rich tracts occupy residues 77 to 92 (VDED…YDLE), 106 to 139 (SDSE…EVPS), and 163 to 172 (ESNDLSDDNE). Over residues 173-183 (PNYRIEKDANG) the composition is skewed to basic and acidic residues. Residues 379 to 396 (PKLPPPGYEESYHPPPEY) are compositionally biased toward pro residues. Basic and acidic residues predominate over residues 397 to 406 (LPDKKEKEEW). WD repeat units follow at residues 487–526 (GHRG…QLWS), 530–570 (SDED…LELE), 668–706 (KGGG…LVKI), 709–754 (PGAR…RPYK), 758–797 (YHQK…DLLS), and 813–843 (TGDL…RLWM).

This sequence belongs to the WD repeat BOP1/ERB1 family. In terms of assembly, component of the NOP7 complex, composed of ERB1, NOP7 and YTM1. The complex is held together by ERB1, which interacts with NOP7 via its N-terminal domain and with YTM1 via a high-affinity interaction between the seven-bladed beta-propeller domains of the 2 proteins. The NOP7 complex associates with the 66S pre-ribosome.

It is found in the nucleus. It localises to the nucleolus. Its subcellular location is the nucleoplasm. In terms of biological role, component of the NOP7 complex, which is required for maturation of the 25S and 5.8S ribosomal RNAs and formation of the 60S ribosome. The polypeptide is Ribosome biogenesis protein ERB1 (Coccidioides immitis (strain RS) (Valley fever fungus)).